A 435-amino-acid chain; its full sequence is GTPase Der (435 aa).

EngA-type G domains follow at residues 4–167 (KIVA…SKND) and 175–350 (TKIA…QSLS). GTP is bound by residues 10–17 (GRPNVGKS), 57–61 (DTGGI), 119–122 (NKYD), 181–188 (GRPNVGKS), 228–232 (DTAGI), and 293–296 (NKWD). A KH-like domain is found at 351–435 (VKVKTYVLNE…PINLIFRERK (85 aa)).

It belongs to the TRAFAC class TrmE-Era-EngA-EngB-Septin-like GTPase superfamily. EngA (Der) GTPase family. Associates with the 50S ribosomal subunit.

Its function is as follows. GTPase that plays an essential role in the late steps of ribosome biogenesis. This is GTPase Der from Mycoplasma mycoides subsp. mycoides SC (strain CCUG 32753 / NCTC 10114 / PG1).